Reading from the N-terminus, the 98-residue chain is Large ribosomal subunit protein uL23 (98 aa).

Belongs to the universal ribosomal protein uL23 family. As to quaternary structure, part of the 50S ribosomal subunit. Contacts protein L29, and trigger factor when it is bound to the ribosome.

Its function is as follows. One of the early assembly proteins it binds 23S rRNA. One of the proteins that surrounds the polypeptide exit tunnel on the outside of the ribosome. Forms the main docking site for trigger factor binding to the ribosome. The polypeptide is Large ribosomal subunit protein uL23 (Bordetella avium (strain 197N)).